A 79-amino-acid polypeptide reads, in one-letter code: Short neurotoxin 1/5 (79 aa).

The signal sequence occupies residues 1–21; that stretch reads MKTLLLTLVMVTIMCLDLGYT. Cystine bridges form between C24-C41, C34-C59, C63-C71, and C72-C77.

This sequence belongs to the three-finger toxin family. Short-chain subfamily. Type III alpha-neurotoxin sub-subfamily. Expressed by the venom gland.

Its subcellular location is the secreted. In terms of biological role, binds with high affinity to muscle nicotinic acetylcholine receptor (nAChR) and inhibit acetylcholine from binding to the receptor, thereby impairing neuromuscular transmission. Compete with the binding of alpha-bungarotoxin on muscle AChR (from Torpedo) with an IC(50) of 0.31 uM (SNTX1) and 3.1 uM (SNTX5). Is able of exerting muscle paralysis, spasms and increased respiration. This is Short neurotoxin 1/5 from Pseudonaja textilis (Eastern brown snake).